A 214-amino-acid polypeptide reads, in one-letter code: tRNA (guanine-N(7)-)-methyltransferase (214 aa).

Residues E44, E69, D96, and D118 each contribute to the S-adenosyl-L-methionine site. The active site involves D118. Substrate is bound at residue K122. The interaction with RNA stretch occupies residues 124–129; it reads RHEKRR. Residues D154 and 192–195 contribute to the substrate site; that span reads TEYE.

This sequence belongs to the class I-like SAM-binding methyltransferase superfamily. TrmB family.

The enzyme catalyses guanosine(46) in tRNA + S-adenosyl-L-methionine = N(7)-methylguanosine(46) in tRNA + S-adenosyl-L-homocysteine. The protein operates within tRNA modification; N(7)-methylguanine-tRNA biosynthesis. Functionally, catalyzes the formation of N(7)-methylguanine at position 46 (m7G46) in tRNA. In Lacticaseibacillus casei (strain BL23) (Lactobacillus casei), this protein is tRNA (guanine-N(7)-)-methyltransferase.